Consider the following 131-residue polypeptide: Protein FON2 SPARE1 (131 aa).

A signal peptide spans 1 to 22 (MSRRLGAAAAVLLLWLAVLTFA). Positions 67–131 (SPSSLTTTDR…VPTGPNPLHH (65 aa)) are disordered. The span at 76 to 97 (RHHHHHRHHGHHHHRGHDRWNR) shows a compositional bias: basic residues.

The protein belongs to the CLV3/ESR signal peptide family. As to expression, expressed in all aerial apical meristems, including the floral and inflorescence meristems in the reproductive phase and the shoot apical meristem in the vegetative phase. Also detected in the primordia of lateral organs such as the leaf and the floral organs.

The protein localises to the secreted. Involved in the maintenance of the floral meristem and of the shoot apical meristem in the vegetative phase. Suppresses the fon2 mutation and acts independently of FON1. In Oryza sativa subsp. japonica, the protein has a single amino acid substitution at the putative processing site of the signal peptide and is inactive. This is Protein FON2 SPARE1 (FOS1) from Oryza sativa subsp. indica (Rice).